Here is a 467-residue protein sequence, read N- to C-terminus: Serum response factor homolog B (467 aa).

Over residues 1-15 (MELNMNQYDNIESND) the composition is skewed to polar residues. Disordered stretches follow at residues 1–38 (MELN…KSGR), 115–245 (NTPD…NNLT), and 301–467 (IQNI…PSDL). Positions 36 to 96 (SGRRKINIEF…GHVYTFATPK (61 aa)) constitute an MADS-box domain. Residues 128 to 205 (NNNNGNNSNN…NNNNNNNNNN (78 aa)) are compositionally biased toward low complexity. Residues 206-220 (CKEEQNMNIPNERKS) show a composition bias toward basic and acidic residues. Composition is skewed to low complexity over residues 222–245 (NNIN…NNLT), 301–334 (IQNI…SNNI), 347–392 (GSNS…NSNN), and 401–440 (PSPI…YGGY). Residues 442–467 (QPFSRNYPLQSNIATNSTVSKAPSDL) show a composition bias toward polar residues.

The protein localises to the nucleus. This Dictyostelium discoideum (Social amoeba) protein is Serum response factor homolog B (srfB).